A 637-amino-acid polypeptide reads, in one-letter code: MASIEEIAHQIIEQQMGEISRSQTEVSQTALMDGTTQRIQLVPSESNVSVPQRIQIVTDPQTGQKIQIVTALDQSGVSKQFILTNNDGSLPSKVILARQDSNQGKVFLTTPDAAGMNQLFFSSPDVPAQHIQILSDTQSLDQNLNKQLVELCVVCGDKASGRHYGAVTCEGCKGFFKRSIRKNLVYTCRGSKDCVINKHYRNRCQYCRLQRCMSLGMKQDSVQCERKPIEVSREKSSNCAASTEKIYIRKDLRSPLAATTTFVTENKTPRTTSLLDSSMLVNIQQSGVKNESILITPNKVEACQGDLSTLANVVTSLANLNKTNDLPQTNTELSIIESLSNGDSSLSDLAQDDQSSSEVTRAFDTLAKALNQSENSTQGSSECLGSNANLLHDVNVEIEGPLLNDVHIAFRLTMPSPMPEYLNVHYICESASRLLFLSMHWARSIPSFQSLGQENSISLVKACWNELFSLGLAQCSQVMNVETILAAFVNHLQNSMQHDKLSSDKVKLVTDHIFKLQEFCNSMVKLCVDGYEYAYLKAIALFSPDHPGLENVSHIEKLQEKAYMEFQDYVTKTYPEDTYRLSRLLLRLPALRLMNAAITEELFFAGLIGNVQIDSIIPYILRMETSDYNSQIIGLAV.

A DNA-binding region (nuclear receptor) is located at residues Val-149 to Cys-224. NR C4-type zinc fingers lie at residues Cys-152–Cys-172 and Cys-188–Cys-207. The NR LBD domain maps to Cys-383–Glu-624.

Belongs to the nuclear hormone receptor family. NR2 subfamily.

It is found in the nucleus. Orphan nuclear receptor. Binds the IR7 element in the promoter of its own gene in an autoregulatory negative feedback mechanism. Primarily repressor of a broad range of genes. Binds to hormone response elements (HREs) consisting of two 5'-AGGTCA-3' half site direct repeat consensus sequences. This is Nuclear receptor subfamily 2 group C member 1-A (nr2c1-a) from Xenopus laevis (African clawed frog).